Consider the following 2604-residue polypeptide: Probable polyketide synthase 17 (2604 aa).

Residues 11-433 (NDDIAIIGMG…GSNCHMILSE (423 aa)) enclose the Ketosynthase family 3 (KS3) domain. Active-site for beta-ketoacyl synthase activity residues include cysteine 179, histidine 316, and histidine 356. Residues 631 to 664 (GISPSIVVGHSFGEIPSALFSDVISLETAVKIVY) are acyl/malonyl transferases. Serine 641 (for acyl/malonyl transferase activity) is an active-site residue. Residues 937–1057 (NNLLGHDQFA…GRIGLFKHNP (121 aa)) are N-terminal hotdog fold. In terms of domain architecture, PKS/mFAS DH spans 937-1216 (NNLLGHDQFA…CTSLIRLKKQ (280 aa)). Histidine 968 acts as the Proton acceptor; for dehydratase activity in catalysis. The interval 1072–1216 (SFTTLTKSEV…CTSLIRLKKQ (145 aa)) is C-terminal hotdog fold. Aspartate 1132 functions as the Proton donor; for dehydratase activity in the catalytic mechanism. The interval 1357 to 1407 (GESEHFSPSNPSSPNDTPRNNSNNCSSKNNAASSDDADDDTNNEETINQLN) is disordered. Residues 1363 to 1390 (SPSNPSSPNDTPRNNSNNCSSKNNAASS) show a composition bias toward low complexity. The 78-residue stretch at 2507–2584 (GDSGSTQAKV…SIIQRISSKS (78 aa)) folds into the Carrier domain. Serine 2544 carries the O-(pantetheine 4'-phosphoryl)serine modification. Over residues 2581-2597 (SSKSTSTSTPNPTNTSK) the composition is skewed to low complexity. The segment at 2581–2604 (SSKSTSTSTPNPTNTSKQTATKKT) is disordered.

Requires pantetheine 4'-phosphate as cofactor.

Its function is as follows. Probable polyketide synthase. In Dictyostelium discoideum (Social amoeba), this protein is Probable polyketide synthase 17 (pks17).